We begin with the raw amino-acid sequence, 273 residues long: Octanoyl-[GcvH]:protein N-octanoyltransferase (273 aa).

The region spanning 40–245 (ATEGAAIRSW…SLMELGATLT (206 aa)) is the BPL/LPL catalytic domain. C144 serves as the catalytic Acyl-thioester intermediate.

This sequence belongs to the octanoyltransferase LipL family.

The enzyme catalyses N(6)-octanoyl-L-lysyl-[glycine-cleavage complex H protein] + L-lysyl-[lipoyl-carrier protein] = N(6)-octanoyl-L-lysyl-[lipoyl-carrier protein] + L-lysyl-[glycine-cleavage complex H protein]. Its pathway is protein modification; protein lipoylation via endogenous pathway; protein N(6)-(lipoyl)lysine from octanoyl-[acyl-carrier-protein]. Catalyzes the amidotransfer (transamidation) of the octanoyl moiety from octanoyl-GcvH to the lipoyl domain of the E2 subunit of lipoate-dependent enzymes. The protein is Octanoyl-[GcvH]:protein N-octanoyltransferase of Exiguobacterium sibiricum (strain DSM 17290 / CCUG 55495 / CIP 109462 / JCM 13490 / 255-15).